The following is a 481-amino-acid chain: Protein NRT1/ PTR FAMILY 1.3 (481 aa).

The next 12 helical transmembrane spans lie at 32–52, 57–77, 88–108, 124–144, 173–193, 202–222, 259–279, 302–322, 333–353, 374–394, 422–442, and 451–471; these read LAYF…YGMG, ANIL…GAFI, IGFG…TTII, LLKS…AGGV, FNWY…LLVF, IGFG…FAAS, IWST…FIVL, IFLV…IVPL, LGVM…ISAL, AMWL…NTIA, ASLI…GSWI, and LDYY…YFVW.

It belongs to the major facilitator superfamily. Proton-dependent oligopeptide transporter (POT/PTR) (TC 2.A.17) family. As to expression, expressed in roots.

The protein localises to the membrane. The protein is Protein NRT1/ PTR FAMILY 1.3 (NPF1.3) of Arabidopsis thaliana (Mouse-ear cress).